The chain runs to 416 residues: Gamma-glutamyl phosphate reductase (416 aa).

The protein belongs to the gamma-glutamyl phosphate reductase family.

It localises to the cytoplasm. It catalyses the reaction L-glutamate 5-semialdehyde + phosphate + NADP(+) = L-glutamyl 5-phosphate + NADPH + H(+). The protein operates within amino-acid biosynthesis; L-proline biosynthesis; L-glutamate 5-semialdehyde from L-glutamate: step 2/2. Catalyzes the NADPH-dependent reduction of L-glutamate 5-phosphate into L-glutamate 5-semialdehyde and phosphate. The product spontaneously undergoes cyclization to form 1-pyrroline-5-carboxylate. This is Gamma-glutamyl phosphate reductase from Actinobacillus succinogenes (strain ATCC 55618 / DSM 22257 / CCUG 43843 / 130Z).